Reading from the N-terminus, the 191-residue chain is GDP-mannose pyrophosphatase (191 aa).

GDP-alpha-D-mannose is bound by residues Y17, 38–40 (KRE), R67, and 85–87 (AGL). The region spanning 43–180 (DRGNGATILL…EIRDGKTVLL (138 aa)) is the Nudix hydrolase domain. A85, E100, and E104 together coordinate Mg(2+). Positions 86–106 (GLLDNDEPEVCIRKEAIEETG) match the Nudix box motif. GDP-alpha-D-mannose contacts are provided by residues E104, E127, 150-151 (DE), and K176. Position 151 (E151) interacts with Mg(2+).

It belongs to the Nudix hydrolase family. NudK subfamily. In terms of assembly, homodimer. Requires Mg(2+) as cofactor.

It carries out the reaction GDP-alpha-D-mannose + H2O = alpha-D-mannose 1-phosphate + GMP + 2 H(+). Nucleoside diphosphate sugar hydrolase that hydrolyzes GDP-mannose as its preferred substrate, yielding GMP and mannose-1-phosphate. The chain is GDP-mannose pyrophosphatase (nudK) from Shigella boydii serotype 4 (strain Sb227).